The chain runs to 85 residues: Conotoxin MaIr94 (85 aa).

A signal peptide spans 1–22; it reads MKLTCVLIITVLFLTACQLTAA. A propeptide spanning residues 23-49 is cleaved from the precursor; the sequence is GNSRDKQEDPVVRSSGEVQRSEDIKLA. Disulfide bonds link cysteine 52–cysteine 69, cysteine 59–cysteine 73, and cysteine 68–cysteine 84.

It belongs to the conotoxin O1 superfamily. Expressed by the venom duct.

It localises to the secreted. Produces no obvious effect on ionic currents when tested on the mouse dorsal rooted ganglia (DRG). This Conus marmoreus (Marble cone) protein is Conotoxin MaIr94.